A 151-amino-acid chain; its full sequence is Superoxide dismutase [Cu-Zn] 4 (151 aa).

Cu cation is bound by residues histidine 45, histidine 47, and histidine 62. Residues cysteine 56 and cysteine 145 are joined by a disulfide bond. Zn(2+) is bound by residues histidine 62, histidine 70, histidine 79, and aspartate 82. Histidine 120 contributes to the Cu cation binding site.

The protein belongs to the Cu-Zn superoxide dismutase family. Homodimer. It depends on Cu cation as a cofactor. The cofactor is Zn(2+).

The protein localises to the cytoplasm. The catalysed reaction is 2 superoxide + 2 H(+) = H2O2 + O2. In terms of biological role, destroys radicals which are normally produced within the cells and which are toxic to biological systems. Protects spores from cellular damage caused by UV LIGHT. This Dictyostelium discoideum (Social amoeba) protein is Superoxide dismutase [Cu-Zn] 4 (sodD).